Consider the following 502-residue polypeptide: Bone morphogenetic protein receptor type-1B (502 aa).

A signal peptide spans 1-13; that stretch reads MLLRSAGKLNVGT. The segment at 1 to 25 is disordered; sequence MLLRSAGKLNVGTKKEDGESTAPTP. Over 14 to 126 the chain is Extracellular; it reads KKEDGESTAP…DFVDGPIHHR (113 aa). 5 cysteine pairs are disulfide-bonded: cysteine 32–cysteine 53, cysteine 34–cysteine 38, cysteine 47–cysteine 71, cysteine 81–cysteine 95, and cysteine 96–cysteine 102. Residues 127-148 traverse the membrane as a helical segment; it reads ALLISVTVCSLLLVLIILFCYF. The Cytoplasmic segment spans residues 149–502; the sequence is RYKRQETRPR…KMSESQDIKL (354 aa). The GS domain maps to 174–203; sequence ESLRDLIEQSQSSGSGSGLPLLVQRTIAKQ. The Protein kinase domain occupies 204 to 494; the sequence is IQMVKQIGKG…LRVKKTLAKM (291 aa). ATP is bound by residues 210-218 and lysine 231; that span reads IGKGRYGEV. Aspartate 332 (proton acceptor) is an active-site residue.

This sequence belongs to the protein kinase superfamily. TKL Ser/Thr protein kinase family. TGFB receptor subfamily. In terms of assembly, interacts with high affinity with GDF5; positively regulates chondrocyte differentiation. Interacts with SCUBE3. Interacts with TSC22D1/TSC-22. Interacts with TGFBR3. The cofactor is Mg(2+). It depends on Mn(2+) as a cofactor. Post-translationally, autophosphorylated.

The protein localises to the cell membrane. The catalysed reaction is L-threonyl-[receptor-protein] + ATP = O-phospho-L-threonyl-[receptor-protein] + ADP + H(+). The enzyme catalyses L-seryl-[receptor-protein] + ATP = O-phospho-L-seryl-[receptor-protein] + ADP + H(+). On ligand binding, forms a receptor complex consisting of two type II and two type I transmembrane serine/threonine kinases. Type II receptors phosphorylate and activate type I receptors which autophosphorylate, then bind and activate SMAD transcriptional regulators. Receptor for BMP7/OP-1 and GDF5. Positively regulates chondrocyte differentiation through GDF5 interaction. The polypeptide is Bone morphogenetic protein receptor type-1B (BMPR1B) (Homo sapiens (Human)).